Consider the following 825-residue polypeptide: Probable phosphoketolase (825 aa).

It belongs to the XFP family. It depends on thiamine diphosphate as a cofactor.

The sequence is that of Probable phosphoketolase from Schizosaccharomyces pombe (strain 972 / ATCC 24843) (Fission yeast).